Here is a 201-residue protein sequence, read N- to C-terminus: Proteasome subunit beta 1 (201 aa).

A propeptide spans 1 to 10 (removed in mature form; by autocatalysis); sequence MNGSPSAMKG. Residue Thr11 is the Nucleophile of the active site.

It belongs to the peptidase T1B family. As to quaternary structure, the 20S proteasome core is composed of 14 alpha and 14 beta subunits that assemble into four stacked heptameric rings, resulting in a barrel-shaped structure. The two inner rings, each composed of seven catalytic beta subunits, are sandwiched by two outer rings, each composed of seven alpha subunits. The catalytic chamber with the active sites is on the inside of the barrel. Has a gated structure, the ends of the cylinder being occluded by the N-termini of the alpha-subunits. Is capped at one or both ends by the proteasome regulatory ATPase, PAN.

The protein resides in the cytoplasm. It catalyses the reaction Cleavage of peptide bonds with very broad specificity.. Its activity is regulated as follows. The formation of the proteasomal ATPase PAN-20S proteasome complex, via the docking of the C-termini of PAN into the intersubunit pockets in the alpha-rings, triggers opening of the gate for substrate entry. Interconversion between the open-gate and close-gate conformations leads to a dynamic regulation of the 20S proteasome proteolysis activity. Its function is as follows. Component of the proteasome core, a large protease complex with broad specificity involved in protein degradation. This chain is Proteasome subunit beta 1, found in Thermococcus gammatolerans (strain DSM 15229 / JCM 11827 / EJ3).